Reading from the N-terminus, the 342-residue chain is UDP-xylose transporter 1 (342 aa).

10 consecutive transmembrane segments (helical) span residues 7–27, 36–56, 75–95, 100–120, 132–152, 154–174, 184–204, 221–241, 250–270, and 280–300; these read MQMG…SIVI, LGFP…YCTL, VVLF…SLGF, FYQM…TLFL, LFLL…LNFV, SVLS…TNTI, QLLY…GPFV, IVVG…FSTF, VTYQ…GYTL, and IAGI…CSVA. Residues 305–342 form a disordered region; the sequence is QASSDSTFLGKDRDTTPLLGQENENHHEAKKLDKHSPV. The segment covering 327–342 has biased composition (basic and acidic residues); sequence NENHHEAKKLDKHSPV.

This sequence belongs to the TPT transporter family. TPT (TC 2.A.7.9) subfamily. Ubiquitous.

Its subcellular location is the golgi apparatus membrane. The protein resides in the endoplasmic reticulum membrane. Its function is as follows. Nucleotide-sugar transporter that transports UDP-xylose and UMP in a strict counter-exchange mode. This Arabidopsis thaliana (Mouse-ear cress) protein is UDP-xylose transporter 1.